Here is a 342-residue protein sequence, read N- to C-terminus: Small GTPase LIP1 (342 aa).

A small GTPase-like region spans residues 12 to 285; sequence KEQILAPLCG…FHGDPYKYNN (274 aa). GTP is bound by residues 29–36, 90–94, and 160–163; these read GDSGVGKT, DVSGH, and NKAD. Disordered regions lie at residues 274 to 313 and 323 to 342; these read TSFH…TPDN and SVQE…DINV. Polar residues predominate over residues 323-333; it reads SVQETTNNGSA.

Belongs to the small GTPase superfamily.

It is found in the nucleus. The protein localises to the cytoplasm. Functionally, functional small GTPase that acts as a negative factor controlling the light-dependent period shortening of circadian rhythms and light-induced phase resetting during the subjective night. May protect the clock from excessive or mistimed light. Suppresses red and blue light-mediated photomorphogenesis and is required for light-controlled inhibition of endoreplication and tolerance to salt stress. The entrainment of the circadian clock is independent from the other pleiotropic effects. Could be a regulator of seedling establishment. The sequence is that of Small GTPase LIP1 from Arabidopsis thaliana (Mouse-ear cress).